We begin with the raw amino-acid sequence, 82 residues long: Large ribosomal subunit protein uL23 (82 aa).

The protein belongs to the universal ribosomal protein uL23 family. In terms of assembly, part of the 50S ribosomal subunit. Contacts protein L29.

Binds to 23S rRNA. One of the proteins that surrounds the polypeptide exit tunnel on the outside of the ribosome. The protein is Large ribosomal subunit protein uL23 of Sulfolobus acidocaldarius (strain ATCC 33909 / DSM 639 / JCM 8929 / NBRC 15157 / NCIMB 11770).